A 441-amino-acid chain; its full sequence is 3-phosphoshikimate 1-carboxyvinyltransferase (441 aa).

The disordered stretch occupies residues 1-21; sequence MSANGPSHPARELKAGGSLSG. 3-phosphoshikimate-binding residues include K29, S30, and R34. K29 provides a ligand contact to phosphoenolpyruvate. Phosphoenolpyruvate-binding residues include G103 and R132. 3-phosphoshikimate contacts are provided by S177, Q179, D328, and K355. Residue Q179 coordinates phosphoenolpyruvate. D328 serves as the catalytic Proton acceptor. The phosphoenolpyruvate site is built by R359 and R401.

Belongs to the EPSP synthase family. In terms of assembly, monomer.

It localises to the cytoplasm. It carries out the reaction 3-phosphoshikimate + phosphoenolpyruvate = 5-O-(1-carboxyvinyl)-3-phosphoshikimate + phosphate. Its pathway is metabolic intermediate biosynthesis; chorismate biosynthesis; chorismate from D-erythrose 4-phosphate and phosphoenolpyruvate: step 6/7. In terms of biological role, catalyzes the transfer of the enolpyruvyl moiety of phosphoenolpyruvate (PEP) to the 5-hydroxyl of shikimate-3-phosphate (S3P) to produce enolpyruvyl shikimate-3-phosphate and inorganic phosphate. The polypeptide is 3-phosphoshikimate 1-carboxyvinyltransferase (Parasynechococcus marenigrum (strain WH8102)).